The chain runs to 410 residues: Arginine deiminase (410 aa).

Cys-400 acts as the Amidino-cysteine intermediate in catalysis.

The protein belongs to the arginine deiminase family.

Its subcellular location is the cytoplasm. It catalyses the reaction L-arginine + H2O = L-citrulline + NH4(+). Its pathway is amino-acid degradation; L-arginine degradation via ADI pathway; carbamoyl phosphate from L-arginine: step 1/2. The polypeptide is Arginine deiminase (Bacillus cereus (strain G9842)).